An 866-amino-acid polypeptide reads, in one-letter code: Interleukin-17 receptor A (866 aa).

The first 32 residues, 1 to 32, serve as a signal peptide directing secretion; it reads MGAARSPPSAVPGPLLGLLLLLLGVLAPGGAS. Residues 33–320 lie on the Extracellular side of the membrane; it reads LRLLDHRALV…EPIPDYMPLW (288 aa). Cysteine 43 and cysteine 50 are disulfide-bonded. N-linked (GlcNAc...) asparagine glycans are attached at residues asparagine 49, asparagine 54, and asparagine 67. Cystine bridges form between cysteine 57/cysteine 126 and cysteine 185/cysteine 196. N-linked (GlcNAc...) asparagine glycosylation is found at asparagine 206, asparagine 225, asparagine 242, and asparagine 265. Cystine bridges form between cysteine 245/cysteine 276, cysteine 277/cysteine 303, and cysteine 290/cysteine 294. Residues 321–341 traverse the membrane as a helical segment; sequence VYWFITGISILLVGSVILLIV. Topologically, residues 342 to 866 are cytoplasmic; the sequence is CMTWRLAGPG…MGSESEGPSA (525 aa). The SEFIR domain occupies 377-534; that stretch reads PRKVWIIYSA…LMDRFEEVYF (158 aa). Phosphoserine occurs at positions 708 and 736. 2 disordered regions span residues 717-736 and 773-840; these read LFLPVDPEDSPLGSSTPMAS and MVLT…RSLQ. Polar residues predominate over residues 788-801; that stretch reads QSVQSDQGYISRSS. The span at 809–819 shows a compositional bias: acidic residues; sequence TEMEEEEEEEQ.

In terms of assembly, forms heterodimers with IL17RC; the heterodimer binds IL17A and IL17F homodimers as well as the heterodimer formed by IL17A and IL17F. Forms complexes with 2:1 binding stoichiometry: two receptor chains for one interleukin molecule. IL17A homodimer preferentially drives the formation of IL17RA-IL17RC heterodimeric receptor complex, whereas IL17F homodimer forms predominantly complexes with IL17RC homodimer. IL17A homodimer adopts an asymmetrical ternary structure with one IL17RA molecule, allowing for high affinity interactions of one IL17A monomer with one IL17RA molecule (via D1 and D2 domains), while disfavoring binding of a second IL17RA molecule on the other IL17A monomer. IL17A-IL17F forms complexes with IL17RA-IL17RC, but with lower affinity when compared to IL17A homodimer. IL17RA chain cannot distinguish between IL17A and IL17F molecules, potentially enabling the formation of topologically distinct complexes. Interacts with TRAF3IP2. Forms heterodimers with IL17RE; the heterodimer binds IL17C. (Microbial infection) Interacts with SARS coronavirus-2/SARS-CoV-2 virus protein ORF8. Post-translationally, glycosylated. As to expression, widely expressed.

The protein resides in the cell membrane. It localises to the secreted. Its function is as follows. Receptor for IL17A and IL17F, major effector cytokines of innate and adaptive immune system involved in antimicrobial host defense and maintenance of tissue integrity. Receptor for IL17A. Receptor for IL17F. Binds to IL17A with higher affinity than to IL17F. Binds IL17A and IL17F homodimers as part of a heterodimeric complex with IL17RC. Also binds heterodimers formed by IL17A and IL17F as part of a heterodimeric complex with IL17RC. Cytokine binding triggers homotypic interaction of IL17RA and IL17RC chains with TRAF3IP2 adapter, leading to TRAF6-mediated activation of NF-kappa-B and MAPkinase pathways, ultimately resulting in transcriptional activation of cytokines, chemokines, antimicrobial peptides and matrix metalloproteinases, with potential strong immune inflammation. Involved in antimicrobial host defense primarily promoting neutrophil activation and recruitment at infection sites to destroy extracellular bacteria and fungi. In secondary lymphoid organs, contributes to germinal center formation by regulating the chemotactic response of B cells to CXCL12 and CXCL13, enhancing retention of B cells within the germinal centers, B cell somatic hypermutation rate and selection toward plasma cells. Plays a role in the maintenance of the integrity of epithelial barriers during homeostasis and pathogen infection. Stimulates the production of antimicrobial beta-defensins DEFB1, DEFB103A, and DEFB104A by mucosal epithelial cells, limiting the entry of microbes through the epithelial barriers. Involved in antiviral host defense through various mechanisms. Enhances immunity against West Nile virus by promoting T cell cytotoxicity. Contributes to Influenza virus clearance by driving the differentiation of B-1a B cells, providing for production of virus-specific IgM antibodies at first line of host defense. Receptor for IL17C as part of a heterodimeric complex with IL17RE. Functionally, (Microbial infection) Receptor for SARS coronavirus-2/SARS-CoV-2 virus protein ORF8, leading to IL17 pathway activation and an increased secretion of pro-inflammatory factors through activating NF-kappa-B signaling pathway. This is Interleukin-17 receptor A from Homo sapiens (Human).